The chain runs to 237 residues: RNA-binding protein 38 (237 aa).

The interval 1–24 (MLLQPACSPSVFPRPSAAPSAMHG) is disordered. Residues 32–109 (TKIFVGGLPY…RKANVNLAYL (78 aa)) enclose the RRM domain.

The protein belongs to the RBM38 family. Expressed in cardiac and skeletal muscle tissues.

It is found in the cytoplasm. The protein localises to the cytosol. Its subcellular location is the nucleus. Its function is as follows. RNA-binding protein that specifically bind the 3'-UTR of CDKN1A transcripts, leading to maintain the stability of CDKN1A transcripts, thereby acting as a mediator of the p53/TP53 family to regulate CDKN1A. CDKN1A is a cyclin-dependent kinase inhibitor transcriptionally regulated by the p53/TP53 family to induce cell cycle arrest. Has the ability to induce cell cycle arrest in G1 and maintain the stability of CDKN1A transcripts induced by p53/TP53. Also acts as a mRNA splicing factor. Specifically regulates the expression of FGFR2-IIIb, an epithelial cell-specific isoform of FGFR2. Plays a role in myogenic differentiation. This chain is RNA-binding protein 38 (Rbm38), found in Mus musculus (Mouse).